A 78-amino-acid chain; its full sequence is Acyl carrier protein (78 aa).

Residues 2 to 77 form the Carrier domain; that stretch reads SNLEERVKKI…AAIDYVTANA (76 aa). An O-(pantetheine 4'-phosphoryl)serine modification is found at serine 37.

The protein belongs to the acyl carrier protein (ACP) family. 4'-phosphopantetheine is transferred from CoA to a specific serine of apo-ACP by AcpS. This modification is essential for activity because fatty acids are bound in thioester linkage to the sulfhydryl of the prosthetic group.

It localises to the cytoplasm. It functions in the pathway lipid metabolism; fatty acid biosynthesis. Its function is as follows. Carrier of the growing fatty acid chain in fatty acid biosynthesis. The polypeptide is Acyl carrier protein (Vibrio vulnificus (strain CMCP6)).